Consider the following 292-residue polypeptide: Pyridoxal 5'-phosphate synthase subunit PdxS (292 aa).

Position 22 (aspartate 22) interacts with D-ribose 5-phosphate. Lysine 79 acts as the Schiff-base intermediate with D-ribose 5-phosphate in catalysis. Glycine 151 is a binding site for D-ribose 5-phosphate. Residue arginine 163 coordinates D-glyceraldehyde 3-phosphate. Residues glycine 212 and 233 to 234 (GS) contribute to the D-ribose 5-phosphate site.

The protein belongs to the PdxS/SNZ family. As to quaternary structure, in the presence of PdxT, forms a dodecamer of heterodimers.

The catalysed reaction is aldehydo-D-ribose 5-phosphate + D-glyceraldehyde 3-phosphate + L-glutamine = pyridoxal 5'-phosphate + L-glutamate + phosphate + 3 H2O + H(+). It participates in cofactor biosynthesis; pyridoxal 5'-phosphate biosynthesis. Its function is as follows. Catalyzes the formation of pyridoxal 5'-phosphate from ribose 5-phosphate (RBP), glyceraldehyde 3-phosphate (G3P) and ammonia. The ammonia is provided by the PdxT subunit. Can also use ribulose 5-phosphate and dihydroxyacetone phosphate as substrates, resulting from enzyme-catalyzed isomerization of RBP and G3P, respectively. The sequence is that of Pyridoxal 5'-phosphate synthase subunit PdxS from Thermoanaerobacter sp. (strain X514).